Here is a 321-residue protein sequence, read N- to C-terminus: Mechanosensory protein 3 (321 aa).

LIM zinc-binding domains lie at 27 to 86 (NKCN…DHSI) and 87 to 152 (HRCA…QMDD). Residues 217–276 (RRGPRTTIKQNQLDVLNEMFSNTPKPSKHARAKLALETGLSMRVIQVWFQNRRSKERRLK) constitute a DNA-binding region (homeobox).

In terms of assembly, interacts with unc-86; the heterooligomer binds to the promoters of mec-3, mec-4 and mec-7. As to expression, expressed in the mechanosensory neurons ALML, ALMR, PLML, PLMR, AVM and PVM, and the FLPL and FLPR neurons.

It is found in the nucleus. Its function is as follows. Transcription factor. Specifies differentiation of the set of six touch receptor neurons (TRNs). May positively modulate expression of both its own gene and also of homeobox ARX homolog alr-1 in TRNs, forming a positive feedback loop with alr-1, thereby restricting the variability of expression of mec-3. Required to determine the identity of ALM sensory neurons, acting by interacting with unc-86, thereby preventing unc-86 cooperating with pag-3 to induce BDU-neuron specific genes. Binds cooperatively as a heterodimer with unc-86 to sites in the mec-3 gene promoter. Promotes outgrowth of lateral dendritic branches on the PVD nociceptive neurons, probably acting both directly, and upstream of zinc finger protein egl-46. The protein is Mechanosensory protein 3 (mec-3) of Caenorhabditis elegans.